The following is a 395-amino-acid chain: Elongation factor Tu (395 aa).

A tr-type G domain is found at 10–204 (KPHLNIGTIG…AVDNWIEEPV (195 aa)). Residues 19 to 26 (GHVDHGKT) are G1. 19-26 (GHVDHGKT) contacts GTP. Threonine 26 serves as a coordination point for Mg(2+). The interval 60-64 (GITIN) is G2. Positions 81 to 84 (DCPG) are G3. Residues 81 to 85 (DCPGH) and 136 to 139 (NKVD) each bind GTP. Positions 136-139 (NKVD) are G4. Residues 174-176 (SAL) form a G5 region.

This sequence belongs to the TRAFAC class translation factor GTPase superfamily. Classic translation factor GTPase family. EF-Tu/EF-1A subfamily. Monomer.

It is found in the cytoplasm. The catalysed reaction is GTP + H2O = GDP + phosphate + H(+). Its function is as follows. GTP hydrolase that promotes the GTP-dependent binding of aminoacyl-tRNA to the A-site of ribosomes during protein biosynthesis. This is Elongation factor Tu from Flavobacterium johnsoniae (strain ATCC 17061 / DSM 2064 / JCM 8514 / BCRC 14874 / CCUG 350202 / NBRC 14942 / NCIMB 11054 / UW101) (Cytophaga johnsonae).